Reading from the N-terminus, the 399-residue chain is Nicotinate phosphoribosyltransferase (399 aa).

His-217 is modified (phosphohistidine; by autocatalysis).

It belongs to the NAPRTase family. Transiently phosphorylated on a His residue during the reaction cycle. Phosphorylation strongly increases the affinity for substrates and increases the rate of nicotinate D-ribonucleotide production. Dephosphorylation regenerates the low-affinity form of the enzyme, leading to product release.

The catalysed reaction is nicotinate + 5-phospho-alpha-D-ribose 1-diphosphate + ATP + H2O = nicotinate beta-D-ribonucleotide + ADP + phosphate + diphosphate. It participates in cofactor biosynthesis; NAD(+) biosynthesis; nicotinate D-ribonucleotide from nicotinate: step 1/1. Functionally, catalyzes the synthesis of beta-nicotinate D-ribonucleotide from nicotinate and 5-phospho-D-ribose 1-phosphate at the expense of ATP. The chain is Nicotinate phosphoribosyltransferase from Burkholderia orbicola (strain MC0-3).